The following is a 1608-amino-acid chain: Protein REDUCED CHLOROPLAST COVERAGE 3 (1608 aa).

Residues 1–12 (MAPRSSKGKSNN) show a composition bias toward basic residues. 2 disordered regions span residues 1 to 22 (MAPRSSKGKSNNKGKGGDKKKR) and 278 to 303 (VSESASPLPTEDEHWGGNGGGQGRNG). The Clu domain maps to 288 to 564 (EDEHWGGNGG…KKETDVCGKP (277 aa)). TPR repeat units follow at residues 848-881 (GRTLLESSKLALDKGKLDDAVSYGTKALVKMIAV), 890-923 (ACAYSLLAVVLYHTGDFNQATIYQQKALDINERE), 932-965 (MKSYGDLSVFYYRLQHFELALKYVNRALFLLHFT), and 974-1007 (AATYINVAMMEKEVGNDHLALRYLHEALKSNKRL). Disordered regions lie at residues 1194–1226 (VEESTLDEGWQEAYSKGRSGNGAGRKSRQRQPD), 1238–1292 (HNRN…ASGA), 1369–1400 (KQESQESAESVENLTSESEGDLGSYRGKKTSD), 1466–1499 (TPRSMNPDAPEFVPRRSLQNSSQHAGEDASVSVD), and 1531–1552 (PAALSKTSPEAESGGTSEKDSA). The Nuclear localization signal signature appears at 1217–1224 (GRKSRQRQ). 2 stretches are compositionally biased toward polar residues: residues 1242 to 1265 (QDVQQQNIYSPLQKTSKGPSLSKS) and 1373 to 1385 (QESAESVENLTSE). Residues 1535–1546 (SKTSPEAESGGT) show a composition bias toward polar residues.

It is found in the nucleus. It localises to the cytoplasm. The protein resides in the cytosol. Its function is as follows. May act as the scaffold of a protein complex, which sequesters key factors that are required for the G2 to M transition in meristematic tissues. Together with REC2, REC3 and FMT/CLU, contributes to the establishment of the cellular volume devoted to the chloroplast compartment. This chain is Protein REDUCED CHLOROPLAST COVERAGE 3, found in Arabidopsis thaliana (Mouse-ear cress).